The primary structure comprises 793 residues: Phenylalanine--tRNA ligase beta subunit (793 aa).

A tRNA-binding domain is found at 40–159 (SKLNTKLVIG…MDEMVGREIS (120 aa)). One can recognise a B5 domain in the interval 401 to 476 (NYDNVYSITL…RLYGYDNIIE (76 aa)). Mg(2+)-binding residues include aspartate 454, aspartate 460, glutamate 463, and glutamate 464. Residues 701–793 (SKFQKSTRDI…NLKELKVKVR (93 aa)) form the FDX-ACB domain.

It belongs to the phenylalanyl-tRNA synthetase beta subunit family. Type 1 subfamily. In terms of assembly, tetramer of two alpha and two beta subunits. The cofactor is Mg(2+).

It localises to the cytoplasm. The enzyme catalyses tRNA(Phe) + L-phenylalanine + ATP = L-phenylalanyl-tRNA(Phe) + AMP + diphosphate + H(+). The polypeptide is Phenylalanine--tRNA ligase beta subunit (Mesoplasma florum (strain ATCC 33453 / NBRC 100688 / NCTC 11704 / L1) (Acholeplasma florum)).